The chain runs to 558 residues: S-layer protein (558 aa).

The N-terminal stretch at 1–28 is a signal peptide; that stretch reads MAMSLKKIGAIAVGGAMVATALASGVAA. 7 N-linked (GlcNAc...) asparagine glycosylation sites follow: N112, N138, N158, N197, N226, N291, and N374.

The protein belongs to the Mj S-layer protein family.

The protein localises to the secreted. It localises to the cell wall. It is found in the S-layer. S-layer protein. The S-layer is a paracrystalline mono-layered assembly of proteins which coat the surface of the cell. The chain is S-layer protein (sla) from Methanocaldococcus jannaschii (strain ATCC 43067 / DSM 2661 / JAL-1 / JCM 10045 / NBRC 100440) (Methanococcus jannaschii).